Here is a 391-residue protein sequence, read N- to C-terminus: Formate-dependent phosphoribosylglycinamide formyltransferase (391 aa).

Residues 20 to 21 and glutamate 80 contribute to the N(1)-(5-phospho-beta-D-ribosyl)glycinamide site; that span reads EL. ATP is bound by residues arginine 112, lysine 153, 158–163, 193–196, and glutamate 201; these read SSGKGQ and EGFI. The 190-residue stretch at 117-306 folds into the ATP-grasp domain; sequence RLAAETLGLP…EFALHVRAIL (190 aa). 2 residues coordinate Mg(2+): glutamate 265 and glutamate 277. N(1)-(5-phospho-beta-D-ribosyl)glycinamide is bound by residues aspartate 284, lysine 354, and 361-362; that span reads RR.

Belongs to the PurK/PurT family. In terms of assembly, homodimer.

It catalyses the reaction N(1)-(5-phospho-beta-D-ribosyl)glycinamide + formate + ATP = N(2)-formyl-N(1)-(5-phospho-beta-D-ribosyl)glycinamide + ADP + phosphate + H(+). The protein operates within purine metabolism; IMP biosynthesis via de novo pathway; N(2)-formyl-N(1)-(5-phospho-D-ribosyl)glycinamide from N(1)-(5-phospho-D-ribosyl)glycinamide (formate route): step 1/1. Functionally, involved in the de novo purine biosynthesis. Catalyzes the transfer of formate to 5-phospho-ribosyl-glycinamide (GAR), producing 5-phospho-ribosyl-N-formylglycinamide (FGAR). Formate is provided by PurU via hydrolysis of 10-formyl-tetrahydrofolate. In Shewanella sp. (strain MR-7), this protein is Formate-dependent phosphoribosylglycinamide formyltransferase.